A 930-amino-acid polypeptide reads, in one-letter code: Polypeptide N-acetylgalactosaminyltransferase 5 (930 aa).

Topologically, residues 1–12 are cytoplasmic; it reads MNKIRKFFRGSG. A helical; Signal-anchor for type II membrane protein transmembrane segment spans residues 13-35; that stretch reads RVLAFIFVASVIWLLFDMAALRL. The Lumenal segment spans residues 36 to 930; it reads SFSEINTGIL…KWKFEKYYDV (895 aa). The tract at residues 163 to 210 is disordered; sequence GSEKDSFTVSRGVPLNKTAEHTETLDKKQEAPENYNLSSDTSKQASQR. The N-linked (GlcNAc...) asparagine glycan is linked to N178. The segment covering 180–193 has biased composition (basic and acidic residues); that stretch reads TAEHTETLDKKQEA. Positions 197 to 210 are enriched in polar residues; sequence YNLSSDTSKQASQR. 2 N-linked (GlcNAc...) asparagine glycosylation sites follow: N198 and N213. S285 is modified (phosphoserine). N287 and N309 each carry an N-linked (GlcNAc...) asparagine glycan. The tract at residues 344 to 377 is disordered; the sequence is LGESQGKHIPRSQSQTLSSPLAPKRAVSQSKPTL. N-linked (GlcNAc...) asparagine glycans are attached at residues N387 and N403. 3 disulfide bridges follow: C476-C708, C699-C779, and C812-C825. Positions 485 to 594 are catalytic subdomain A; that stretch reads LPTTSIIMCF…VGWLEPLLER (110 aa). Residues D526 and R555 each coordinate substrate. N-linked (GlcNAc...) asparagine glycosylation is present at N568. A Mn(2+)-binding site is contributed by D578. S579 is a substrate binding site. H580 lines the Mn(2+) pocket. Residues 654–716 form a catalytic subdomain B region; sequence IIRCPVMAGG…PCSRVGHIFR (63 aa). Position 685 (W685) interacts with substrate. H713 contacts Mn(2+). 2 residues coordinate substrate: R716 and Y721. 3 N-linked (GlcNAc...) asparagine glycosylation sites follow: N766, N817, and N835. The Ricin B-type lectin domain occupies 794–925; that stretch reads KAPVVRASGV…TEPQQKWKFE (132 aa). 2 disulfides stabilise this stretch: C848-C863 and C898-C913. N902 carries N-linked (GlcNAc...) asparagine glycosylation.

The protein belongs to the glycosyltransferase 2 family. GalNAc-T subfamily. As to quaternary structure, interacts with EXT2. Does not interact with EXT1, EXTL1 or EXTL3. It depends on Mn(2+) as a cofactor. Predominantly expressed in sublingual gland. Expressed at lower level in stomach and small intestine. Weakly or not expressed in submandibular gland, parotid gland, kidney, liver, heart, brain, spleen, lung, skeletal muscle, testis, ovary, cervix and uterus.

The protein localises to the golgi apparatus membrane. The catalysed reaction is L-seryl-[protein] + UDP-N-acetyl-alpha-D-galactosamine = a 3-O-[N-acetyl-alpha-D-galactosaminyl]-L-seryl-[protein] + UDP + H(+). It catalyses the reaction L-threonyl-[protein] + UDP-N-acetyl-alpha-D-galactosamine = a 3-O-[N-acetyl-alpha-D-galactosaminyl]-L-threonyl-[protein] + UDP + H(+). Its pathway is protein modification; protein glycosylation. Functionally, catalyzes the initial reaction in O-linked oligosaccharide biosynthesis, the transfer of an N-acetyl-D-galactosamine residue to a serine or threonine residue on the protein receptor. Has activity toward EA2 peptide substrate, but has a weak activity toward Muc2, Muc1b, rMuc-2 or mG-Muc substrates. The sequence is that of Polypeptide N-acetylgalactosaminyltransferase 5 (Galnt5) from Rattus norvegicus (Rat).